The following is a 91-amino-acid chain: Virion membrane protein A14 homolog (91 aa).

Residues 1–12 (MDPLGFFRNRPS) are Intravirion-facing. The helical transmembrane segment at 13-33 (YVVVFGIILLIVACICAYIEL) threads the bilayer. Topologically, residues 34–46 (SKSGKPADSALRS) are virion surface. Residues 47-67 (ISIISFILAILLLLGIILFSG) form a helical membrane-spanning segment. The Intravirion portion of the chain corresponds to 68–91 (YNRYCTGNVVDESRYATSPGTEIQ).

This sequence belongs to the chordopoxvirinae A14 family. Homodimer; disulfide-linked. Interacts with A17. Phosphorylated by viral F10 kinase, phosphorylation state is regulated by H1 phosphatase.

The protein resides in the virion membrane. Its function is as follows. Envelope protein which is a major component of the mature virion (MV) membrane. Essential for membrane biogenesis. Is required, together with A17, to form bona fide crescents, which can progress to form the immature virion (IV) membrane. A14 and A17 form a lattice that is stabilized by disulfide bonds and serves as an anchor within the viral membrane to which several other proteins important in virion structure and morphogenesis attach. In Fowlpox virus (strain NVSL) (FPV), this protein is Virion membrane protein A14 homolog.